Reading from the N-terminus, the 613-residue chain is Dihydroxy-acid dehydratase (613 aa).

Aspartate 81 serves as a coordination point for Mg(2+). Cysteine 122 provides a ligand contact to [2Fe-2S] cluster. Aspartate 123 and lysine 124 together coordinate Mg(2+). At lysine 124 the chain carries N6-carboxylysine. Cysteine 195 contacts [2Fe-2S] cluster. Glutamate 491 is a binding site for Mg(2+). Serine 517 serves as the catalytic Proton acceptor.

This sequence belongs to the IlvD/Edd family. Homodimer. [2Fe-2S] cluster is required as a cofactor. The cofactor is Mg(2+).

It carries out the reaction (2R)-2,3-dihydroxy-3-methylbutanoate = 3-methyl-2-oxobutanoate + H2O. The enzyme catalyses (2R,3R)-2,3-dihydroxy-3-methylpentanoate = (S)-3-methyl-2-oxopentanoate + H2O. It functions in the pathway amino-acid biosynthesis; L-isoleucine biosynthesis; L-isoleucine from 2-oxobutanoate: step 3/4. Its pathway is amino-acid biosynthesis; L-valine biosynthesis; L-valine from pyruvate: step 3/4. Its function is as follows. Functions in the biosynthesis of branched-chain amino acids. Catalyzes the dehydration of (2R,3R)-2,3-dihydroxy-3-methylpentanoate (2,3-dihydroxy-3-methylvalerate) into 2-oxo-3-methylpentanoate (2-oxo-3-methylvalerate) and of (2R)-2,3-dihydroxy-3-methylbutanoate (2,3-dihydroxyisovalerate) into 2-oxo-3-methylbutanoate (2-oxoisovalerate), the penultimate precursor to L-isoleucine and L-valine, respectively. This is Dihydroxy-acid dehydratase from Photobacterium profundum (strain SS9).